Here is a 788-residue protein sequence, read N- to C-terminus: MSTDYSSPAYLQKVDKYWRAANYLSVGQLYLKDNPLLQRPLKASDVKVHPIGHWGTIAGQNFIYAHLNRVINKYGLKMFYVEGPGHGGQVMVSNSYLDGTYTDIYPEITQDVEGMQKLFKQFSFPGGVASHAAPETPGSIHEGGELGYSISHGVGAILDNPDEIAAVVVGDGESETGPLATSWQSTKFINPINDGAVLPILNLNGFKISNPTIFGRTSDEKIKQYFESMNWEPIFVEGDDPEKVHPALAKAMDEAVEKIKAIQKNARENDDATLPVWPMIVFRAPKGWTGPKSWDGDKIEGSFRAHQIPIPVDQTDMEHADALVDWLESYQPKELFNEDGSLKDDIKEIIPTGDARMAANPITNGGVDPKALNLPNFRDYAVDTSKHGANVKQDMIVWSDYLRDVIKKNPDNFRLFGPDETMSNRLYGVFETTNRQWMEDIHPDSDQYEAPAGRVLDAQLSEHQAEGWLEGYVLTGRHGLFASYEAFLRVVDSMLTQHFKWLRKANELDWRKKYPSLNIIAASTVFQQDHNGYTHQDPGALTHLAEKKPEYIREYLPADANSLLAVGDVIFRSQEKINYVVTSKHPRQQWFSIEEAKQLVDNGLGIIDWASTDQGSEPDIVFAAAGTEPTLETLAAIQLLHDSFPDMKIRFVNVVDILKLRSPEKDPRGLSDAEFDHYFTKDKPVVFAFHGYEDLVRDIFFDRHNHNLHVHGYRENGDITTPFDVRVMNQMDRFDLAKSAIAAQPAMENTGAAFVQDMDNMLAKHNAYIRDAGTDLPEVNDWQWKGLK.

This sequence belongs to the XFP family. Homohexamer. It depends on thiamine diphosphate as a cofactor.

It catalyses the reaction D-xylulose 5-phosphate + phosphate = acetyl phosphate + D-glyceraldehyde 3-phosphate + H2O. This Lactiplantibacillus pentosus (Lactobacillus pentosus) protein is Xylulose-5-phosphate phosphoketolase (xpkA).